Here is a 151-residue protein sequence, read N- to C-terminus: MAQLMNKAKNFVAEKVANVEKPKASVEDVDLKDVGRHGITYLTRICVENPYSASIPVGEIKYTLKSAGRVIVSGNIPDPGSLKGNDKTMLEPAIKVPHSALVSLIKDIGADMDIDYVLELGLVVDLPVIGNFTIPLSHKGEMKLPGLSDIF.

Belongs to the LEA type 2 family.

The sequence is that of Desiccation-related protein PCC27-45 from Craterostigma plantagineum (Blue gem).